We begin with the raw amino-acid sequence, 584 residues long: POTE ankyrin domain family member D (584 aa).

ANK repeat units follow at residues 172 to 201 (EKRT…QLNV), 205 to 234 (KKRT…DRNI), 238 to 267 (YGNT…DIES), 271 to 300 (CGLT…NLNV), 304 to 333 (YGRT…DVSS), and 337 to 366 (SGQT…KQML). The segment at 369–502 (SSENSNPEQD…ILTNKQKQIE (134 aa)) is disordered. Basic and acidic residues-rich tracts occupy residues 377–392 (QDLK…RLKV), 401–412 (MSQEPEINKDCD), and 466–481 (EEYH…KQLS). Residues 482–498 (EEQNTGISQDEILTNKQ) are compositionally biased toward polar residues. Positions 494 to 583 (LTNKQKQIEV…LNEEALTKTN (90 aa)) form a coiled coil.

It belongs to the POTE family. As to expression, expressed in prostate, ovary, testis, placenta and prostate cancer cell lines. Localizes to basal and terminal prostate epithelial cells.

The protein resides in the cell membrane. This chain is POTE ankyrin domain family member D (POTED), found in Homo sapiens (Human).